Consider the following 370-residue polypeptide: Flagellar P-ring protein (370 aa).

Positions 1–21 (MKYILIKLSIVMIFIINSASK) are cleaved as a signal peptide.

Belongs to the FlgI family. As to quaternary structure, the basal body constitutes a major portion of the flagellar organelle and consists of four rings (L,P,S, and M) mounted on a central rod.

Its subcellular location is the bacterial flagellum basal body. Its function is as follows. Assembles around the rod to form the L-ring and probably protects the motor/basal body from shearing forces during rotation. The sequence is that of Flagellar P-ring protein from Wigglesworthia glossinidia brevipalpis.